Here is a 724-residue protein sequence, read N- to C-terminus: NAD(+) hydrolase SARM1 (724 aa).

Residues 1-27 (MVLTLLFSAYKLCRFFTMSGPRPGADR) constitute a mitochondrion transit peptide. Residues 24–56 (GADRLTVPGPDRSGGASPWWAAGGRGSREVSPG) are disordered. The segment covering 36–45 (SGGASPWWAA) has biased composition (low complexity). The ARM 1 repeat unit spans residues 60-100 (EVQGALERSLPELQQALSELKQASAARAVGAGLAEVFQLVE). Residues Trp103, Arg110, 149-157 (EQILVAENR), and 190-193 (HMFK) contribute to the NAD(+) site. ARM repeat units follow at residues 114-153 (QGLC…QILV), 155-193 (ENRD…HMFK), 196-235 (EETC…NCAL), 237-280 (GGQT…LATN), 281-314 (KEVE…CLVD), 315-354 (ASDT…AEAA), and 359-402 (QGKT…EEVP). 2 SAM domains span residues 412 to 476 (WKEA…LKTF) and 486 to 548 (NLAD…MLHS). 2 positions are modified to phosphoserine: Ser548 and Ser558. The TIR domain occupies 560-703 (DTPDVFISYR…KIIRFLQGRP (144 aa)). Residues 569 to 570 (RR) and Glu599 each bind NAD(+). Glu642 is an active-site residue. Positions 703 to 716 (PSQDSSAGSDTSLE) are enriched in polar residues. The interval 703–724 (PSQDSSAGSDTSLEGATPMGLP) is disordered.

This sequence belongs to the SARM1 family. Homooctamer; forms an octameric ring via SAM domains. Interacts with TICAM1/TRIF and thereby interferes with TICAM1/TRIF function. Interacts with SDC2 (via cytoplasmic domain) and MAPK10/JNK3. Phosphorylation at Ser-548 by JNK kinases (MAPK8, MAPK9 and /or MAPK10) enhance the NAD(+) hydrolase (NADase) activity. Phosphorylation at Ser-548 and subsequent activation takes place in response to oxidative stress conditions and inhibits mitochondrial respiration. In terms of tissue distribution, widely expressed in the brain and neurons (at protein level). Expressed in photoreceptor cells of the neural retina.

It is found in the cytoplasm. The protein resides in the cell projection. The protein localises to the axon. Its subcellular location is the dendrite. It localises to the synapse. It is found in the mitochondrion. It carries out the reaction NAD(+) + H2O = ADP-D-ribose + nicotinamide + H(+). The enzyme catalyses NAD(+) = cyclic ADP-beta-D-ribose + nicotinamide + H(+). The catalysed reaction is NADP(+) + H2O = ADP-D-ribose 2'-phosphate + nicotinamide + H(+). With respect to regulation, autoinhibited: in the inactive state, the enzymatic TIR domain is held apart by the autoinhibiting ARM repeats. NAD(+)-binding to ARM repeats maintains an inactive state by promoting interaction between ARM repeats and the TIR domain, thereby facilitating inhibition of the enzymatic TIR domain. Following activation, possibly by nicotinamide mononucleotide (NMN), auto-inhibitory interactions are released, allowing self-association of the TIR domains and subsequent activation of the NAD(+) hydrolase (NADase) activity. Self-association of TIR domains is facilitated by the octamer of SAM domains. In terms of biological role, NAD(+) hydrolase, which plays a key role in axonal degeneration following injury by regulating NAD(+) metabolism. Acts as a negative regulator of MYD88- and TRIF-dependent toll-like receptor signaling pathway by promoting Wallerian degeneration, an injury-induced form of programmed subcellular death which involves degeneration of an axon distal to the injury site. Wallerian degeneration is triggered by NAD(+) depletion: in response to injury, SARM1 is activated and catalyzes cleavage of NAD(+) into ADP-D-ribose (ADPR), cyclic ADPR (cADPR) and nicotinamide; NAD(+) cleavage promoting cytoskeletal degradation and axon destruction. Also able to hydrolyze NADP(+), but not other NAD(+)-related molecules. Can activate neuronal cell death in response to stress. Regulates dendritic arborization through the MAPK4-JNK pathway. Involved in innate immune response: inhibits both TICAM1/TRIF- and MYD88-dependent activation of JUN/AP-1, TRIF-dependent activation of NF-kappa-B and IRF3, and the phosphorylation of MAPK14/p38. This chain is NAD(+) hydrolase SARM1, found in Mus musculus (Mouse).